The chain runs to 392 residues: Succinyl-diaminopimelate desuccinylase (392 aa).

Histidine 71 is a Zn(2+) binding site. The active site involves aspartate 73. Aspartate 102 contacts Zn(2+). The active-site Proton acceptor is the glutamate 144. Residues glutamate 145, glutamate 173, and histidine 362 each contribute to the Zn(2+) site.

It belongs to the peptidase M20A family. DapE subfamily. In terms of assembly, homodimer. The cofactor is Zn(2+). Co(2+) serves as cofactor.

It catalyses the reaction N-succinyl-(2S,6S)-2,6-diaminopimelate + H2O = (2S,6S)-2,6-diaminopimelate + succinate. It participates in amino-acid biosynthesis; L-lysine biosynthesis via DAP pathway; LL-2,6-diaminopimelate from (S)-tetrahydrodipicolinate (succinylase route): step 3/3. Its function is as follows. Catalyzes the hydrolysis of N-succinyl-L,L-diaminopimelic acid (SDAP), forming succinate and LL-2,6-diaminopimelate (DAP), an intermediate involved in the bacterial biosynthesis of lysine and meso-diaminopimelic acid, an essential component of bacterial cell walls. The polypeptide is Succinyl-diaminopimelate desuccinylase (Rhodospirillum rubrum (strain ATCC 11170 / ATH 1.1.1 / DSM 467 / LMG 4362 / NCIMB 8255 / S1)).